The primary structure comprises 112 residues: MPDYMVTLESAWIIKDVKTMDDAISIAIGEAGKRLNPAAKYVEIETGMMVCPLCNKALNCAVVVANTALVGLTLQMKVFRAESEEHAVRIAKSVIGKALRDVPLNVQDVQEL.

The protein belongs to the UPF0212 family.

The protein is UPF0212 protein Mpal_1084 of Methanosphaerula palustris (strain ATCC BAA-1556 / DSM 19958 / E1-9c).